The following is a 1186-amino-acid chain: MENKQKTATTVKVSPGPLGYVYARRLPPEGLTELALLSARSADSDTAVLPLIAGLTVESGFDVNVAVVVGSRTTGVGGTGVSLKLMPSHYAPSAYVFHGGRHLAPSSAAPNLSLLCDRARVQFGFSSFKPKPCEAEGETTGEALCEHLGLNPNESLLYMVIAEGFKEAVYISNTILHMGGVGTVTIAGEEVRRIPIYPLQMFMPDYCRAVADPFNDRHRAIGEYFAYPLPFFNAKLASLLFGAAVGPAAVALRARNVDAVARAAAHLAFDENHEGAALPADITFTAFDPTGSKAGHRNPRECGGGFEQRLASVMAGDAALALESIMSMAVFEEPPTDIGTWPMLTCQESTAARAASIGAYLGRAAGLVGAMVFSSNSALHLTEVDDAGPADPKDPTKPSFYRFFLVPGTYVAANPQLDRDGRVVAGHEGRPIVPIVGGNHEFTCEHLATLCGFSPELLAKMLYYLERCDGGVILGRPEMDTFKYVSDSAHTDVPCCLCSLDNRHSCAHTTLLRLRARHPKFTSTTRGAIGIFGVMNSAYSDCDVLGNYASFSAIKRMDVQETARAIMQETYRSAVERVMAELENLNYIDAAVPTSPAKLESIITGREALQTVVSNVKQVVDGEVAQLMRALVEGRGFRFREALGEANHAMSLTLDPHASVPCPLLQMLGRRSNLAVYQDLALSQCHGVFEGQAVEGRNFRSQFQPVLRRRVLDMFNNGFLSARTLTVALTDGACISAPGLVSGQHAAAESGFEGDVARVNLGFPKEIRVKSRVLFAGAGPAASEAARARIAGLQSAYQKSDKRVDILLGPLGFMLKQFHATLFPNGKPPGSDNPNPQWFWTALQRNQLPARLLSREDISLIAFVKRFSVEYGAGNFVNLPPNNISELAMYYMANQILKYCDHSTYFINTLTALIAGSRRPPNAQAAAAWAPRGGTELEAQARSVVANPGDHPGAWTTMFASCNLLRPVMATRPMVVLGLSISKYYGMAGNDRVFQAGNLANLLGGKNACPLLIFDRTRKFVIACPRAGFVCAAVSAGSGAHESSLCEQLRAIIAEGGATVASDVFAAAAKSLGARVQQLQIEDWLALLEDEYLSEEMMELAGRALERGGGEWSLDAALDVAREAEAMVTRHVDAEETFDFGAFAEDGPADAGLAVHLQSRRRPLACSDLFGDAPAEKRNDLTLDML.

A zinc finger spans residues 495-508; the sequence is CCLCSLDNRHSCAH. The short motif at 839 to 840 is the Required for filament formation element; the sequence is FW. The required for nuclear localization stretch occupies residues 1160-1186; it reads RRRPLACSDLFGDAPAEKRNDLTLDML.

Belongs to the herpesviridae major DNA-binding protein family. As to quaternary structure, homooligomers. Forms double-helical filaments necessary for the formation of replication compartments within the host nucleus. Interacts with the origin-binding protein. Interacts with the helicase primase complex; this interaction stimulates primer synthesis activity of the helicase-primase complex. Interacts with the DNA polymerase. Interacts with the alkaline exonuclease; this interaction increases its nuclease processivity.

It is found in the host nucleus. Functionally, plays several crucial roles in viral infection. Participates in the opening of the viral DNA origin to initiate replication by interacting with the origin-binding protein. May disrupt loops, hairpins and other secondary structures present on ssDNA to reduce and eliminate pausing of viral DNA polymerase at specific sites during elongation. Promotes viral DNA recombination by performing strand-transfer, characterized by the ability to transfer a DNA strand from a linear duplex to a complementary single-stranded DNA circle. Can also catalyze the renaturation of complementary single strands. Additionally, reorganizes the host cell nucleus, leading to the formation of prereplicative sites and replication compartments. This process is driven by the protein which can form double-helical filaments in the absence of DNA. In Bovine herpesvirus 2 (strain BMV) (BoHV-2), this protein is Major DNA-binding protein.